Consider the following 294-residue polypeptide: Diphthine synthase (294 aa).

S-adenosyl-L-methionine is bound by residues Asp-93, Val-96, 121–122 (SG), Leu-173, and Ala-220.

The protein belongs to the diphthine synthase family. In terms of assembly, homodimer.

It catalyses the reaction 2-[(3S)-amino-3-carboxypropyl]-L-histidyl-[translation elongation factor 2] + 3 S-adenosyl-L-methionine = diphthine-[translation elongation factor 2] + 3 S-adenosyl-L-homocysteine + 3 H(+). The protein operates within protein modification; peptidyl-diphthamide biosynthesis. Functionally, S-adenosyl-L-methionine-dependent methyltransferase that catalyzes the trimethylation of the amino group of the modified target histidine residue in translation elongation factor 2 (EF-2), to form an intermediate called diphthine. The three successive methylation reactions represent the second step of diphthamide biosynthesis. The protein is Diphthine synthase (dphB) of Aeropyrum pernix (strain ATCC 700893 / DSM 11879 / JCM 9820 / NBRC 100138 / K1).